An 835-amino-acid chain; its full sequence is Phenylalanine--tRNA ligase beta subunit (835 aa).

Positions 44-158 constitute a tRNA-binding domain; sequence GPVDGPLTVG…LPGADGADVL (115 aa). The region spanning 414–493 is the B5 domain; that stretch reads WSLPPIRIAV…RLEGLEVIRS (80 aa). 4 residues coordinate Mg(2+): Asp471, Asp477, Glu480, and Glu481. In terms of domain architecture, FDX-ACB spans 741 to 834; that stretch reads SPFPAVLQDV…AAERVGATLR (94 aa).

It belongs to the phenylalanyl-tRNA synthetase beta subunit family. Type 1 subfamily. Tetramer of two alpha and two beta subunits. Requires Mg(2+) as cofactor.

It is found in the cytoplasm. The enzyme catalyses tRNA(Phe) + L-phenylalanine + ATP = L-phenylalanyl-tRNA(Phe) + AMP + diphosphate + H(+). In Mycobacterium leprae (strain TN), this protein is Phenylalanine--tRNA ligase beta subunit.